Here is a 109-residue protein sequence, read N- to C-terminus: Class I hydrophobin 7 (109 aa).

Residues 1–17 form the signal peptide; the sequence is MFAQSFIITALAALAVA. Disulfide bonds link Cys-28-Cys-88, Cys-35-Cys-82, Cys-36-Cys-69, and Cys-89-Cys-102.

This sequence belongs to the fungal hydrophobin family. As to quaternary structure, self-assembles to form functional amyloid fibrils called rodlets. Self-assembly into fibrillar rodlets occurs spontaneously at hydrophobic:hydrophilic interfaces and the rodlets further associate laterally to form amphipathic monolayers.

It is found in the secreted. The protein localises to the cell wall. Functionally, aerial growth, conidiation, and dispersal of filamentous fungi in the environment rely upon a capability of their secreting small amphipathic proteins called hydrophobins (HPBs) with low sequence identity. Class I can self-assemble into an outermost layer of rodlet bundles on aerial cell surfaces, conferring cellular hydrophobicity that supports fungal growth, development and dispersal; whereas Class II form highly ordered films at water-air interfaces through intermolecular interactions but contribute nothing to the rodlet structure. Hydph7 is a class I hydrophobin involved in fruiting body development. This Pleurotus ostreatus (strain PC15) (Oyster mushroom) protein is Class I hydrophobin 7.